A 399-amino-acid polypeptide reads, in one-letter code: Tryptophan synthase beta chain (399 aa).

Residue Lys92 is modified to N6-(pyridoxal phosphate)lysine.

The protein belongs to the TrpB family. Tetramer of two alpha and two beta chains. Pyridoxal 5'-phosphate serves as cofactor.

It catalyses the reaction (1S,2R)-1-C-(indol-3-yl)glycerol 3-phosphate + L-serine = D-glyceraldehyde 3-phosphate + L-tryptophan + H2O. It functions in the pathway amino-acid biosynthesis; L-tryptophan biosynthesis; L-tryptophan from chorismate: step 5/5. Functionally, the beta subunit is responsible for the synthesis of L-tryptophan from indole and L-serine. The polypeptide is Tryptophan synthase beta chain (Acidithiobacillus ferrooxidans (strain ATCC 23270 / DSM 14882 / CIP 104768 / NCIMB 8455) (Ferrobacillus ferrooxidans (strain ATCC 23270))).